The sequence spans 242 residues: Venom redulysin 2 (242 aa).

The first 19 residues, 1–19 (MSKIWILLLLVGAVQFARG), serve as a signal peptide directing secretion. A propeptide spanning residues 20–46 (FPALEEEQEDDVIDWPSFEYDLSDEER) is cleaved from the precursor.

The protein belongs to the redulysin-like family. In terms of processing, contains 5 disulfide bonds. In terms of tissue distribution, expressed by the venom gland (posterior main gland) (at protein level).

The protein localises to the secreted. Functionally, highly abundant protein that may be responsible for the observed disruption of sensory neuron membranes, since it is homologous to proteins such as trialysin, which forms pores in lipid bilayers. Probable insecticidal toxin. This chain is Venom redulysin 2, found in Platymeris rhadamanthus (Red spot assassin bug).